A 55-amino-acid chain; its full sequence is MAKAVTVKIRLVSTADTGYFYVTKKNSRTQTEKMVMKKYDPVARKHVEFKEAKIK.

The protein belongs to the bacterial ribosomal protein bL33 family.

This is Large ribosomal subunit protein bL33 from Methylorubrum extorquens (strain CM4 / NCIMB 13688) (Methylobacterium extorquens).